Consider the following 334-residue polypeptide: Holliday junction branch migration complex subunit RuvB (334 aa).

The tract at residues 1–181 (MHDRLISGTE…FGIVQRLEFY (181 aa)) is large ATPase domain (RuvB-L). ATP-binding positions include Ile20, Arg21, Gly62, Lys65, Thr66, Thr67, 128 to 130 (EDY), Arg171, Tyr181, and Arg218. Thr66 contributes to the Mg(2+) binding site. A small ATPAse domain (RuvB-S) region spans residues 182–252 (SVEDLTHIVT…MAQRALDMLN (71 aa)). The segment at 255 to 334 (KDGLDTLDRR…FGLTPPEPKN (80 aa)) is head domain (RuvB-H). Residues Arg310 and Arg315 each contribute to the DNA site.

It belongs to the RuvB family. In terms of assembly, homohexamer. Forms an RuvA(8)-RuvB(12)-Holliday junction (HJ) complex. HJ DNA is sandwiched between 2 RuvA tetramers; dsDNA enters through RuvA and exits via RuvB. An RuvB hexamer assembles on each DNA strand where it exits the tetramer. Each RuvB hexamer is contacted by two RuvA subunits (via domain III) on 2 adjacent RuvB subunits; this complex drives branch migration. In the full resolvosome a probable DNA-RuvA(4)-RuvB(12)-RuvC(2) complex forms which resolves the HJ.

It localises to the cytoplasm. It carries out the reaction ATP + H2O = ADP + phosphate + H(+). The RuvA-RuvB-RuvC complex processes Holliday junction (HJ) DNA during genetic recombination and DNA repair, while the RuvA-RuvB complex plays an important role in the rescue of blocked DNA replication forks via replication fork reversal (RFR). RuvA specifically binds to HJ cruciform DNA, conferring on it an open structure. The RuvB hexamer acts as an ATP-dependent pump, pulling dsDNA into and through the RuvAB complex. RuvB forms 2 homohexamers on either side of HJ DNA bound by 1 or 2 RuvA tetramers; 4 subunits per hexamer contact DNA at a time. Coordinated motions by a converter formed by DNA-disengaged RuvB subunits stimulates ATP hydrolysis and nucleotide exchange. Immobilization of the converter enables RuvB to convert the ATP-contained energy into a lever motion, pulling 2 nucleotides of DNA out of the RuvA tetramer per ATP hydrolyzed, thus driving DNA branch migration. The RuvB motors rotate together with the DNA substrate, which together with the progressing nucleotide cycle form the mechanistic basis for DNA recombination by continuous HJ branch migration. Branch migration allows RuvC to scan DNA until it finds its consensus sequence, where it cleaves and resolves cruciform DNA. This chain is Holliday junction branch migration complex subunit RuvB, found in Acinetobacter baylyi (strain ATCC 33305 / BD413 / ADP1).